A 400-amino-acid polypeptide reads, in one-letter code: Multidrug resistance protein MdtH (400 aa).

10 helical membrane-spanning segments follow: residues 13–33, 34–54, 99–116, 139–159, 165–185, 214–234, 244–264, 289–309, 340–360, and 365–385; these read YFLL…FPLI, SIRF…ALGL, PWIL…GTLF, LLLM…SWLL, LVCW…AWLL, VLTL…FPIV, AVKW…YPIA, FPVG…LFYL, LGLA…YDIG, and LPEL…YALH.

The protein belongs to the major facilitator superfamily. DHA1 family. MdtH (TC 2.A.1.2.21) subfamily.

It is found in the cell inner membrane. The polypeptide is Multidrug resistance protein MdtH (Proteus mirabilis (strain HI4320)).